Consider the following 136-residue polypeptide: Large ribosomal subunit protein bL20 (136 aa).

This sequence belongs to the bacterial ribosomal protein bL20 family.

Binds directly to 23S ribosomal RNA and is necessary for the in vitro assembly process of the 50S ribosomal subunit. It is not involved in the protein synthesizing functions of that subunit. This chain is Large ribosomal subunit protein bL20, found in Tropheryma whipplei (strain TW08/27) (Whipple's bacillus).